The primary structure comprises 130 residues: Small ribosomal subunit protein uS9 (130 aa).

This sequence belongs to the universal ribosomal protein uS9 family.

This chain is Small ribosomal subunit protein uS9, found in Tolumonas auensis (strain DSM 9187 / NBRC 110442 / TA 4).